Here is a 355-residue protein sequence, read N- to C-terminus: Ion-translocating oxidoreductase complex subunit D (355 aa).

The next 4 membrane-spanning stretches (helical) occupy residues 23–43 (WVALCALPGLLAQTYFFGWGT), 44–64 (LVQLILAITIALSLEALVMLF), 78–109 (ALVTAWLLAVAIPPMAPWWIITIGLLFAIVIA), and 129–149 (VVLLISFPVQMTSWSAPLPLI). Residue T194 is modified to FMN phosphoryl threonine. 5 consecutive transmembrane segments (helical) span residues 221 to 241 (FAGVGWQWVNLAYLAGGLILL), 250 to 270 (IPVGFLGALLVMSSFFSLFFP), 273 to 293 (TASPLFHLLSGATMLGAFFIA), 307 to 327 (ILFGAIIGTLVFIIRSWGGFP), and 328 to 348 (DGVAFAVLLANMCVPLIDYYT).

The protein belongs to the NqrB/RnfD family. The complex is composed of six subunits: RnfA, RnfB, RnfC, RnfD, RnfE and RnfG. FMN serves as cofactor.

Its subcellular location is the cell inner membrane. In terms of biological role, part of a membrane-bound complex that couples electron transfer with translocation of ions across the membrane. In Vibrio vulnificus (strain CMCP6), this protein is Ion-translocating oxidoreductase complex subunit D.